Here is a 693-residue protein sequence, read N- to C-terminus: DNA ligase (693 aa).

NAD(+) contacts are provided by residues 40 to 44 (DSEYD), 89 to 90 (SL), and E121. The N6-AMP-lysine intermediate role is filled by K123. Residues R144, E179, K295, and K319 each contribute to the NAD(+) site. Zn(2+) contacts are provided by C413, C416, C431, and C437. Residues 610-693 (REQNILTGKI…AFIKCLEKEV (84 aa)) enclose the BRCT domain.

The protein belongs to the NAD-dependent DNA ligase family. LigA subfamily. It depends on Mg(2+) as a cofactor. The cofactor is Mn(2+).

It catalyses the reaction NAD(+) + (deoxyribonucleotide)n-3'-hydroxyl + 5'-phospho-(deoxyribonucleotide)m = (deoxyribonucleotide)n+m + AMP + beta-nicotinamide D-nucleotide.. In terms of biological role, DNA ligase that catalyzes the formation of phosphodiester linkages between 5'-phosphoryl and 3'-hydroxyl groups in double-stranded DNA using NAD as a coenzyme and as the energy source for the reaction. It is essential for DNA replication and repair of damaged DNA. In Rickettsia typhi (strain ATCC VR-144 / Wilmington), this protein is DNA ligase.